Reading from the N-terminus, the 712-residue chain is Zinc finger and BTB domain-containing protein 39 (712 aa).

The 67-residue stretch at 30–96 (CDVTIVVGSR…VYTSELFTDL (67 aa)) folds into the BTB domain. 3 disordered regions span residues 129 to 162 (ARAKPLTSTSESHSGTLSCPSAEPAHPLGELRGG), 176 to 224 (SDAG…IPSM), and 236 to 260 (GIQTSTSSCQPYKVQSNGDFSKNSF). Polar residues predominate over residues 134-147 (LTSTSESHSGTLSC). A Glycyl lysine isopeptide (Lys-Gly) (interchain with G-Cter in SUMO2) cross-link involves residue Lys-183. The C2H2-type 1 zinc-finger motif lies at 372 to 394 (GNCKVCETHFQDRNSRVTHVLSH). The C2H2-type 2; atypical zinc finger occupies 400 to 422 (FSCDMCETKFFTQWQLTLHRRDG). Lys-439 participates in a covalent cross-link: Glycyl lysine isopeptide (Lys-Gly) (interchain with G-Cter in SUMO2). Residues 480–502 (QACSVCDQRHLNLCSLMWHTLSH) form a C2H2-type 3; atypical zinc finger. C2H2-type zinc fingers lie at residues 508–530 (FSCSVCANSFVDWHLLEKHMAVH), 538–560 (FHCRLCSQSFKSEAAYRYHVSQH), 605–627 (YSCKVCGKRFAHTSEFNYHRRIH), and 633–655 (YQCKVCHKFFRGRSTIKCHLKTH). The C2H2-type 8; atypical zinc finger occupies 661 to 683 (YRCTVCGHYSSTLNLMSKHVGVH).

Belongs to the krueppel C2H2-type zinc-finger protein family.

The protein resides in the nucleus. In terms of biological role, may be involved in transcriptional regulation. In Homo sapiens (Human), this protein is Zinc finger and BTB domain-containing protein 39 (ZBTB39).